Reading from the N-terminus, the 281-residue chain is Phosphoglycerate mutase-like protein AT74H (281 aa).

The active-site Tele-phosphohistidine intermediate is the histidine 17. The active-site Proton donor/acceptor is glutamate 109.

Belongs to the phosphoglycerate mutase family.

May play a role in carbohydrates metabolism. The protein is Phosphoglycerate mutase-like protein AT74H of Arabidopsis thaliana (Mouse-ear cress).